The primary structure comprises 334 residues: Homoserine O-acetyltransferase (334 aa).

The region spanning 61-318 (LVLHALTGDS…GSIHGHDAFL (258 aa)) is the AB hydrolase-1 domain. S148 serves as the catalytic Nucleophile. Residue R205 coordinates substrate. Catalysis depends on residues D285 and H314. D315 lines the substrate pocket.

The protein belongs to the AB hydrolase superfamily. MetX family. As to quaternary structure, homodimer.

It localises to the cytoplasm. The enzyme catalyses L-homoserine + acetyl-CoA = O-acetyl-L-homoserine + CoA. Its pathway is amino-acid biosynthesis; L-methionine biosynthesis via de novo pathway; O-acetyl-L-homoserine from L-homoserine: step 1/1. In terms of biological role, transfers an acetyl group from acetyl-CoA to L-homoserine, forming acetyl-L-homoserine. This is Homoserine O-acetyltransferase from Deinococcus radiodurans (strain ATCC 13939 / DSM 20539 / JCM 16871 / CCUG 27074 / LMG 4051 / NBRC 15346 / NCIMB 9279 / VKM B-1422 / R1).